Reading from the N-terminus, the 503-residue chain is Maturase K (503 aa).

It belongs to the intron maturase 2 family. MatK subfamily.

It localises to the plastid. Its subcellular location is the chloroplast. Usually encoded in the trnK tRNA gene intron. Probably assists in splicing its own and other chloroplast group II introns. This is Maturase K from Lathyrus vestitus (Pacific pea).